The primary structure comprises 507 residues: 2,3-bisphosphoglycerate-independent phosphoglycerate mutase (507 aa).

Residues D11 and S61 each coordinate Mn(2+). The Phosphoserine intermediate role is filled by S61. Residues H122, 150–151, R182, R188, 257–260, and K332 each bind substrate; these read RD and RPDR. Mn(2+) is bound by residues D397, H401, D438, H439, and H456.

Belongs to the BPG-independent phosphoglycerate mutase family. Monomer. Requires Mn(2+) as cofactor.

It catalyses the reaction (2R)-2-phosphoglycerate = (2R)-3-phosphoglycerate. The protein operates within carbohydrate degradation; glycolysis; pyruvate from D-glyceraldehyde 3-phosphate: step 3/5. In terms of biological role, catalyzes the interconversion of 2-phosphoglycerate and 3-phosphoglycerate. In Mycoplasma genitalium (strain ATCC 33530 / DSM 19775 / NCTC 10195 / G37) (Mycoplasmoides genitalium), this protein is 2,3-bisphosphoglycerate-independent phosphoglycerate mutase.